A 309-amino-acid polypeptide reads, in one-letter code: 1,4-dihydroxy-2-naphthoyl-CoA synthase (309 aa).

Residues R53, 98-102 (SGGDQ), Y110, 152-156 (WAAGG), T179, S185, Y282, and K297 contribute to the substrate site.

It belongs to the enoyl-CoA hydratase/isomerase family. MenB subfamily.

It catalyses the reaction 2-succinylbenzoyl-CoA + H(+) = 1,4-dihydroxy-2-naphthoyl-CoA + H2O. The protein operates within quinol/quinone metabolism; 1,4-dihydroxy-2-naphthoate biosynthesis; 1,4-dihydroxy-2-naphthoate from chorismate: step 6/7. It participates in quinol/quinone metabolism; menaquinone biosynthesis. In terms of biological role, converts o-succinylbenzoyl-CoA (OSB-CoA) to 1,4-dihydroxy-2-naphthoyl-CoA (DHNA-CoA). The polypeptide is 1,4-dihydroxy-2-naphthoyl-CoA synthase (Mycolicibacterium smegmatis (strain ATCC 700084 / mc(2)155) (Mycobacterium smegmatis)).